The chain runs to 389 residues: Formate-dependent phosphoribosylglycinamide formyltransferase (389 aa).

Residues 12-13 and Glu72 contribute to the N(1)-(5-phospho-beta-D-ribosyl)glycinamide site; that span reads EL. Residues Arg104, Lys145, 150-155, 185-188, and Glu193 contribute to the ATP site; these read SSGKGQ and EAFV. Positions 109 to 300 constitute an ATP-grasp domain; that stretch reads DLASKELGLR…EFELHARAVL (192 aa). 2 residues coordinate Mg(2+): Glu258 and Glu270. N(1)-(5-phospho-beta-D-ribosyl)glycinamide contacts are provided by residues Asp277, Lys348, and 355 to 356; that span reads RR.

This sequence belongs to the PurK/PurT family. As to quaternary structure, homodimer.

It carries out the reaction N(1)-(5-phospho-beta-D-ribosyl)glycinamide + formate + ATP = N(2)-formyl-N(1)-(5-phospho-beta-D-ribosyl)glycinamide + ADP + phosphate + H(+). It functions in the pathway purine metabolism; IMP biosynthesis via de novo pathway; N(2)-formyl-N(1)-(5-phospho-D-ribosyl)glycinamide from N(1)-(5-phospho-D-ribosyl)glycinamide (formate route): step 1/1. In terms of biological role, involved in the de novo purine biosynthesis. Catalyzes the transfer of formate to 5-phospho-ribosyl-glycinamide (GAR), producing 5-phospho-ribosyl-N-formylglycinamide (FGAR). Formate is provided by PurU via hydrolysis of 10-formyl-tetrahydrofolate. The sequence is that of Formate-dependent phosphoribosylglycinamide formyltransferase from Chlorobium phaeobacteroides (strain DSM 266 / SMG 266 / 2430).